A 361-amino-acid polypeptide reads, in one-letter code: 3-dehydroquinate synthase (361 aa).

NAD(+) contacts are provided by residues 106–110, 130–131, K143, and K152; these read GVVGD and TT. The Zn(2+) site is built by E185, H248, and H265.

The protein belongs to the sugar phosphate cyclases superfamily. Dehydroquinate synthase family. The cofactor is NAD(+). Requires Co(2+) as cofactor. Zn(2+) is required as a cofactor.

The protein localises to the cytoplasm. It catalyses the reaction 7-phospho-2-dehydro-3-deoxy-D-arabino-heptonate = 3-dehydroquinate + phosphate. The protein operates within metabolic intermediate biosynthesis; chorismate biosynthesis; chorismate from D-erythrose 4-phosphate and phosphoenolpyruvate: step 2/7. Its function is as follows. Catalyzes the conversion of 3-deoxy-D-arabino-heptulosonate 7-phosphate (DAHP) to dehydroquinate (DHQ). The polypeptide is 3-dehydroquinate synthase (Leptospira interrogans serogroup Icterohaemorrhagiae serovar copenhageni (strain Fiocruz L1-130)).